The primary structure comprises 550 residues: Methionine--tRNA ligase (550 aa).

The 'HIGH' region signature appears at 13-23 (PYANGPLHFGH). The Zn(2+) site is built by cysteine 145, cysteine 148, cysteine 158, and cysteine 161. Residues 331 to 335 (QFSKS) carry the 'KMSKS' region motif. An ATP-binding site is contributed by lysine 334.

This sequence belongs to the class-I aminoacyl-tRNA synthetase family. MetG type 1 subfamily. As to quaternary structure, monomer. The cofactor is Zn(2+).

The protein resides in the cytoplasm. It catalyses the reaction tRNA(Met) + L-methionine + ATP = L-methionyl-tRNA(Met) + AMP + diphosphate. Functionally, is required not only for elongation of protein synthesis but also for the initiation of all mRNA translation through initiator tRNA(fMet) aminoacylation. This is Methionine--tRNA ligase (metG) from Chlamydia trachomatis serovar D (strain ATCC VR-885 / DSM 19411 / UW-3/Cx).